The primary structure comprises 351 residues: Phenylacetaldoxime dehydratase (351 aa).

It belongs to the heme-containing dehydratase family. In terms of assembly, monomer. Heme b serves as cofactor.

The catalysed reaction is (Z)-phenylacetaldehyde oxime = phenylacetonitrile + H2O. Functionally, catalyzes the stoichiometric dehydration of Z-phenylacetaldoxime to phenylacetonitrile. Prefers the Z-form of phenylacetaldoxime over its E-isomer. The chain is Phenylacetaldoxime dehydratase from Bacillus sp. (strain OxB-1).